The following is a 313-amino-acid chain: Cadmium, cobalt and zinc/H(+)-K(+) antiporter (313 aa).

The Extracellular portion of the chain corresponds to 1-14; the sequence is MGHNHNHAGGSNKK. A helical membrane pass occupies residues 15-35; it reads VLLISFIMITGYMIIEAIGGF. Over 36–45 the chain is Cytoplasmic; the sequence is LTNSLALLSD. A helical transmembrane segment spans residues 46–66; it reads AGHMLSDSISLMVALIAFKLA. The Extracellular segment spans residues 67–80; it reads EKKASHHKTFGYKR. Residues 81 to 101 form a helical membrane-spanning segment; the sequence is FEILAAVINGVALILISLYII. Residues 102 to 117 lie on the Cytoplasmic side of the membrane; that stretch reads YEAIKRFSHPPEVATT. A helical transmembrane segment spans residues 118 to 138; that stretch reads GMLTISIIGLAVNILVAWIML. At 139 to 159 the chain is on the extracellular side; that stretch reads NGGDTKNNLNIRGAYLHVISD. The chain crosses the membrane as a helical span at residues 160-180; the sequence is MLGSIGAILAAILIIFFGWSW. At 181-313 the chain is on the cytoplasmic side; the sequence is ADPAASVIVA…TENPRDHHHH (133 aa).

Belongs to the cation diffusion facilitator (CDF) transporter (TC 2.A.4) family. SLC30A subfamily.

The protein localises to the cell membrane. Functionally, involved in divalent cation and potassium homeostasis in the cell. Catalyzes the active efflux of zinc, cadmium and cobalt, in exchange for potassium and H(+) ions. The polypeptide is Cadmium, cobalt and zinc/H(+)-K(+) antiporter (czcD) (Bacillus velezensis (strain DSM 23117 / BGSC 10A6 / LMG 26770 / FZB42) (Bacillus amyloliquefaciens subsp. plantarum)).